The sequence spans 118 residues: Myotrophin (118 aa).

3 ANK repeats span residues 1–30 (MSDKEFMWALKNGDLDEVKDYVAKGEDVNR), 34–65 (GGRKPLHYAADCGQLEILEFLLLKGADINAPD), and 67–98 (HNITPLLSAVYEGHVSCVKLLLSKGADKTVKG).

This sequence belongs to the myotrophin family.

Its subcellular location is the cytoplasm. It localises to the nucleus. The protein resides in the perinuclear region. Regulates NF-kappa-B transcription factor activity. Promotes growth of cardiomyocytes, but not cardiomyocyte proliferation. Promotes cardiac muscle hypertrophy. Plays a role in the regulation of the growth of actin filaments. Inhibits the activity of the F-actin-capping protein complex. This Gallus gallus (Chicken) protein is Myotrophin (MTPN).